Consider the following 422-residue polypeptide: Glutamyl-tRNA reductase (422 aa).

Residues 49-52 (TCNR), Ser107, 112-114 (EPQ), and Gln118 contribute to the substrate site. The active-site Nucleophile is the Cys50. Residue 187–192 (GAGETI) participates in NADP(+) binding.

The protein belongs to the glutamyl-tRNA reductase family. As to quaternary structure, homodimer.

It catalyses the reaction (S)-4-amino-5-oxopentanoate + tRNA(Glu) + NADP(+) = L-glutamyl-tRNA(Glu) + NADPH + H(+). It participates in porphyrin-containing compound metabolism; protoporphyrin-IX biosynthesis; 5-aminolevulinate from L-glutamyl-tRNA(Glu): step 1/2. Functionally, catalyzes the NADPH-dependent reduction of glutamyl-tRNA(Glu) to glutamate 1-semialdehyde (GSA). The chain is Glutamyl-tRNA reductase from Pseudomonas paraeruginosa (strain DSM 24068 / PA7) (Pseudomonas aeruginosa (strain PA7)).